A 188-amino-acid chain; its full sequence is Elongation factor P (188 aa).

It belongs to the elongation factor P family.

It localises to the cytoplasm. It participates in protein biosynthesis; polypeptide chain elongation. Involved in peptide bond synthesis. Stimulates efficient translation and peptide-bond synthesis on native or reconstituted 70S ribosomes in vitro. Probably functions indirectly by altering the affinity of the ribosome for aminoacyl-tRNA, thus increasing their reactivity as acceptors for peptidyl transferase. The polypeptide is Elongation factor P (Streptomyces coelicolor (strain ATCC BAA-471 / A3(2) / M145)).